The chain runs to 281 residues: 2-dehydro-3-deoxyphosphooctonate aldolase (281 aa).

It belongs to the KdsA family.

It localises to the cytoplasm. The enzyme catalyses D-arabinose 5-phosphate + phosphoenolpyruvate + H2O = 3-deoxy-alpha-D-manno-2-octulosonate-8-phosphate + phosphate. It participates in carbohydrate biosynthesis; 3-deoxy-D-manno-octulosonate biosynthesis; 3-deoxy-D-manno-octulosonate from D-ribulose 5-phosphate: step 2/3. Its pathway is bacterial outer membrane biogenesis; lipopolysaccharide biosynthesis. In Acidithiobacillus ferrooxidans (strain ATCC 23270 / DSM 14882 / CIP 104768 / NCIMB 8455) (Ferrobacillus ferrooxidans (strain ATCC 23270)), this protein is 2-dehydro-3-deoxyphosphooctonate aldolase.